The following is a 247-amino-acid chain: ATP synthase subunit a, chloroplastic (247 aa).

Transmembrane regions (helical) follow at residues 38-58 (QVLI…ALAV), 95-115 (VPFI…GALL), 134-154 (INTT…AGLT), 199-219 (LVVV…VMFL), and 220-240 (GLFT…AYIG).

The protein belongs to the ATPase A chain family. As to quaternary structure, F-type ATPases have 2 components, CF(1) - the catalytic core - and CF(0) - the membrane proton channel. CF(1) has five subunits: alpha(3), beta(3), gamma(1), delta(1), epsilon(1). CF(0) has four main subunits: a, b, b' and c.

The protein localises to the plastid. The protein resides in the chloroplast thylakoid membrane. Key component of the proton channel; it plays a direct role in the translocation of protons across the membrane. This is ATP synthase subunit a, chloroplastic from Helianthus annuus (Common sunflower).